The chain runs to 85 residues: Coiled-coil-helix-coiled-coil-helix domain-containing protein 7 (85 aa).

A CHCH domain is found at 13 to 55 (INPCLSESDASTRCLDENNYDRERCSTYFLRYKNCRRFWNSIV). Short sequence motifs (cx9C motif) lie at residues 16 to 26 (CLSESDASTRC) and 37 to 47 (CSTYFLRYKNC). 2 disulfides stabilise this stretch: cysteine 16–cysteine 47 and cysteine 26–cysteine 37.

The protein belongs to the CHCHD7 family. Monomer.

Its subcellular location is the mitochondrion intermembrane space. In Homo sapiens (Human), this protein is Coiled-coil-helix-coiled-coil-helix domain-containing protein 7 (CHCHD7).